We begin with the raw amino-acid sequence, 1616 residues long: Protein Shroom2 (1616 aa).

Residues 26 to 108 (LVEVQLSGGA…TLKLVVKRRS (83 aa)) enclose the PDZ domain. 2 disordered regions span residues 128–159 (ELAA…LSSS) and 183–229 (HPSS…KADT). The segment covering 150-159 (SSSSHDLSSS) has biased composition (low complexity). Polar residues-rich tracts occupy residues 186-197 (SRLSVAKSNSSI) and 220-229 (PDHTLSKADT). At S231 the chain carries Phosphoserine. A compositionally biased stretch (low complexity) spans 247-259 (QGGRQAQAAGDPQ). Disordered stretches follow at residues 247 to 475 (QGGR…SGWQ), 502 to 678 (GALE…PLAG), 695 to 790 (TSFK…SEDT), 802 to 869 (EETS…LPRR), 881 to 1100 (KEQR…PSPA), 1115 to 1184 (PSVF…LTDK), 1268 to 1302 (AEPE…PGLS), and 1363 to 1389 (QRRK…VPAA). A compositionally biased stretch (pro residues) spans 312–321 (SSPPPPPPPL). Residues S313 and S325 each carry the phosphoserine modification. Positions 343–356 (AAAAQHFTALAQAQ) are enriched in low complexity. Residues 358-370 (RGDRRPELTDRPW) show a composition bias toward basic and acidic residues. The span at 405 to 415 (SSRLQASLSSS) shows a compositional bias: low complexity. S413 bears the Phosphoserine mark. In terms of domain architecture, ASD1 spans 684 to 773 (LKEAQARVLR…SEPEKMNEVG (90 aa)). 2 stretches are compositionally biased toward basic and acidic residues: residues 754-770 (FTAE…EKMN) and 821-830 (IPRDKPERPR). Residues 842–854 (WSRTTSLGDSLNA) show a composition bias toward polar residues. A phosphoserine mark is found at S851, S897, S921, S922, and S924. T925 carries the phosphothreonine modification. Residues 926 to 958 (DHYKQEASVELRRQAGDPGEPREELPSAVRAEE) are compositionally biased toward basic and acidic residues. S974 is modified (phosphoserine). The segment covering 975–994 (PGSQQHPPSQKAPNPPTFSE) has biased composition (polar residues). S1036 and S1039 each carry phosphoserine. Over residues 1068–1077 (PKREPRRYRA) the composition is skewed to basic and acidic residues. A compositionally biased stretch (polar residues) spans 1159–1176 (LRLQTATMETSRSPSPQF). Residues S1171, S1173, and S1297 each carry the phosphoserine modification. Residues 1317-1611 (EELAREIVGK…QLKCLLDSLQ (295 aa)) enclose the ASD2 domain.

The protein belongs to the shroom family. Interacts with F-actin. In terms of tissue distribution, abundant in retina and melanoma; also in brain, placenta, lung, kidney and pancreas.

It localises to the apical cell membrane. The protein resides in the cell junction. It is found in the tight junction. The protein localises to the cytoplasm. Its subcellular location is the cytoskeleton. Functionally, may be involved in endothelial cell morphology changes during cell spreading. In the retinal pigment epithelium, may regulate the biogenesis of melanosomes and promote their association with the apical cell surface by inducing gamma-tubulin redistribution. This Homo sapiens (Human) protein is Protein Shroom2 (SHROOM2).